The chain runs to 588 residues: MRTHFCGLVDETLIGQTVTLAGWTDVARNLGGVCFIDLRDHEGIVQVTVEPAEGDANSAEVFKVAASLGYEDVLQVEGVVRARHAVNDKIRTGKVEVIATRITILNKAAPLPFHAHENPGEDTRLKYRYLDLRRPEMQRMQRTRIKLVQALRRHLDARDFQDIETPILTKATPEGARDFLVPARMHPGEFYALPQSPQLFKQILMVAGFDRYYQIARCFRDEALRADRQLEFTQLDMEFAFVRERDVQDFVEDMIRAIFKEVVDVELAAQFPRMTWAEAMRRYGSDKPDLRIALELVDVAELVKTSEFPVFAAAANDADGRVAALRIPGGATLSRKQIDDYAAHAAKYGAKGLAYSKLSETGEVSSPIAKFFGEEAFAALLAHVGAANGDIVFFGAGSYNKVSDFMGALRLKAGKDFGLVAAGWAPLWVTDFPMFEWDEEAQRYVALHHPFTAPAVDDIADLRANARTAVSRGYDMVLNGNEIGGGSIRIHRPDMQSAVFELLGIGAEEARAKFGFLLDALNYGAPPHGGIAFGIDRIAALMAGTESIRDVIPFPKTTGAQDLMTDAPSPIAAEQLAEVHVQVRPKQA.

Glu-174 lines the L-aspartate pocket. Residues 198 to 201 (QLFK) form an aspartate region. Arg-220 contacts L-aspartate. ATP is bound by residues 220–222 (RDE) and Gln-229. His-448 is a binding site for L-aspartate. Position 482 (Glu-482) interacts with ATP. Arg-489 serves as a coordination point for L-aspartate. 534–537 (GIDR) serves as a coordination point for ATP.

This sequence belongs to the class-II aminoacyl-tRNA synthetase family. Type 1 subfamily. In terms of assembly, homodimer.

It localises to the cytoplasm. The catalysed reaction is tRNA(Asp) + L-aspartate + ATP = L-aspartyl-tRNA(Asp) + AMP + diphosphate. Catalyzes the attachment of L-aspartate to tRNA(Asp) in a two-step reaction: L-aspartate is first activated by ATP to form Asp-AMP and then transferred to the acceptor end of tRNA(Asp). The chain is Aspartate--tRNA ligase from Xanthomonas campestris pv. campestris (strain 8004).